A 299-amino-acid polypeptide reads, in one-letter code: uncharacterized protein (299 aa).

In terms of domain architecture, HTH lysR-type spans 1 to 59; that stretch reads MDKIHAMQLFIKVAELESFSRAADFFALPKGSVSRQIQALEHQLGTQLLQRTTRRVKLT. The H-T-H motif DNA-binding region spans 19–38; it reads FSRAADFFALPKGSVSRQIQ.

The protein belongs to the LysR transcriptional regulatory family.

This is an uncharacterized protein from Escherichia coli (strain K12).